The chain runs to 357 residues: G-protein coupled receptor 183 (357 aa).

The Extracellular segment spans residues 1–27; the sequence is MANNFTTPLATSHGNNCDLYAHHSTAR. N-linked (GlcNAc...) asparagine glycosylation is present at Asn-4. A helical transmembrane segment spans residues 28 to 53; sequence VLMPLHYSLVFIIGLVGNLLALVVIV. Over 54–73 the chain is Cytoplasmic; sequence QNRKKINSTTLYSMNLVISD. Residues 74–91 form a helical membrane-spanning segment; sequence ILFTTALPTRIAYYALGF. Arg-83 lines the 7alpha,25-dihydroxycholesterol pocket. Topologically, residues 92-101 are extracellular; it reads DWRIGDALCR. The cysteines at positions 100 and 177 are disulfide-linked. Residues 102 to 123 form a helical membrane-spanning segment; the sequence is VTALVFYINTYAGVNFMTCLSI. 7alpha,25-dihydroxycholesterol is bound by residues Tyr-108 and Tyr-112. Residues 122-130 form an interaction with G proteins region; that stretch reads SIDRFFAVV. Residues 124 to 145 lie on the Cytoplasmic side of the membrane; that stretch reads DRFFAVVHPLRYNKIKRIEYAK. The helical transmembrane segment at 146 to 164 threads the bilayer; it reads GVCLSVWILVFAQTLPLLL. Residues 165–188 are Extracellular-facing; that stretch reads TPMSKEEGDKTTCMEYPNFEGTAS. Residues 189 to 211 traverse the membrane as a helical segment; it reads LPWILLGACLLGYVLPITVILLC. The Cytoplasmic portion of the chain corresponds to 212–237; the sequence is YSQICCKLFRTAKQNPLTEKSGVNKK. A helical transmembrane segment spans residues 238-261; the sequence is ALNTIILIIVVFILCFTPYHVAII. Tyr-256 serves as a coordination point for 7alpha,25-dihydroxycholesterol. Residues 262–283 lie on the Extracellular side of the membrane; that stretch reads QHMIKMLCSPGALECGARHSFQ. Residues 284–308 form a helical membrane-spanning segment; that stretch reads ISLHFTVCLMNFNCCMDPFIYFFAC. Topologically, residues 309–357 are cytoplasmic; it reads KGYKRKVMKMLKRQVSVSISSAVRSAPEENSREMTESQMMIHSKASNGR. Phosphoserine is present on residues Ser-324 and Ser-345. The segment at 336 to 357 is disordered; sequence EENSREMTESQMMIHSKASNGR. A compositionally biased stretch (polar residues) spans 344–357; sequence ESQMMIHSKASNGR.

The protein belongs to the G-protein coupled receptor 1 family. As to quaternary structure, homodimer and heterodimer. Heterodimerizes with CXCR5; leading to modulate the interaction between of CXCL13 and CXCR5. In terms of tissue distribution, expressed in mature B-cells and increases in expression early after activation, before being down-regulated in germinal center B-cells. Expressed in astrocytes. Specifically expressed in CD4(+) dendritic cells but not in CD8(+) dendritic cells. Expressed in monocyte/osteoclasts precursors and mature osteoclasts.

It is found in the cell membrane. Its function is as follows. G-protein coupled receptor expressed in lymphocytes that acts as a chemotactic receptor for B-cells, T-cells, splenic dendritic cells, monocytes/macrophages and astrocytes. Receptor for oxysterol 7-alpha,25-dihydroxycholesterol (7-alpha,25-OHC) and other related oxysterols. Mediates cell positioning and movement of a number of cells by binding the 7-alpha,25-OHC ligand that forms a chemotactic gradient. Binding of 7-alpha,25-OHC mediates the correct localization of B-cells during humoral immune responses. Collaborates with CXCR5 to mediate B-cell migration; probably by forming a heterodimer with CXCR5 that affects the interaction between of CXCL13 and CXCR5. Guides B-cell movement along the B-cell zone-T-cell zone boundary and later to interfollicular and outer follicular regions. Its specific expression during B-cell maturation helps position B-cells appropriately for mounting T-dependent antibody responses. Also acts as a chemotactic receptor for some T-cells upon binding to 7-alpha,25-OHC ligand. Promotes follicular helper T (Tfh) cells differentiation by positioning activated T-cells at the follicle-T-zone interface, promoting contact of newly activated CD4 T-cells with activated dendritic cells and exposing them to Tfh-cell-promoting inducible costimulator (ICOS) ligand. Expression in splenic dendritic cells is required for their homeostasis, localization and ability to induce B- and T-cell responses: GPR183 acts as a chemotactic receptor in dendritic cells that mediates the accumulation of CD4(+) dendritic cells in bridging channels. Regulates migration of astrocytes and is involved in communication between astrocytes and macrophages. Promotes osteoclast precursor migration to bone surfaces. Signals constitutively through G(i)-alpha, but not G(s)-alpha or G(q)-alpha. Signals constitutively also via MAPK1/3 (ERK1/2). The chain is G-protein coupled receptor 183 from Mus musculus (Mouse).